We begin with the raw amino-acid sequence, 597 residues long: Kelch-like protein 21 (597 aa).

The BTB domain occupies 35 to 103 (LDVTLEAAGG…SYTGRVAVSG (69 aa)). The BACK domain occupies 138–239 (CLDMQDFAEA…RRFYLLAHVE (102 aa)). Kelch repeat units lie at residues 287–335 (ILVL…ALGN), 336–382 (DIYV…VLDG), 384–422 (LYVV…ACRG), 423–470 (RLYA…TLNG), 472–512 (MYFV…VLGG), and 513–560 (KLYV…SIFR). A disordered region spans residues 570–597 (GRGFELDSGSDDMDPGRPRPPRDPDELH). A compositionally biased stretch (basic and acidic residues) spans 583-597 (DPGRPRPPRDPDELH).

As to quaternary structure, component of the BCR(KLHL21) E3 ubiquitin ligase complex, at least composed of CUL3, KLHL21 and RBX1.

It is found in the cytoplasm. The protein resides in the cytoskeleton. The protein localises to the spindle. The protein operates within protein modification; protein ubiquitination. In terms of biological role, substrate-specific adapter of a BCR (BTB-CUL3-RBX1) E3 ubiquitin-protein ligase complex required for efficient chromosome alignment and cytokinesis. The BCR(KLHL21) E3 ubiquitin ligase complex regulates localization of the chromosomal passenger complex (CPC) from chromosomes to the spindle midzone in anaphase and mediates the ubiquitination of AURKB. Ubiquitination of AURKB by BCR(KLHL21) E3 ubiquitin ligase complex may not lead to its degradation by the proteasome. The chain is Kelch-like protein 21 (KLHL21) from Homo sapiens (Human).